The following is a 284-amino-acid chain: Tropomyosin (284 aa).

Residues 1–47 form a disordered region; the sequence is MDAIKKKMQAMKIEKDNAMDRADAAEEKARQQQERVEKLEEELRDTQ. Residues 1–284 adopt a coiled-coil conformation; the sequence is MDAIKKKMQA…DQTFQELSGY (284 aa). Basic and acidic residues predominate over residues 12 to 38; that stretch reads KIEKDNAMDRADAAEEKARQQQERVEK.

The protein belongs to the tropomyosin family.

In terms of biological role, tropomyosin, in association with the troponin complex, plays a central role in the calcium dependent regulation of muscle contraction. This Trichinella spiralis (Trichina worm) protein is Tropomyosin.